A 272-amino-acid polypeptide reads, in one-letter code: Endoplasmic reticulum resident protein 27 (272 aa).

Residues 1-25 form the signal peptide; it reads MKITRSRCLILSFVLVCGLVPEVTA. The Thioredoxin domain occupies 39 to 152; that stretch reads EPIWLTDVPA…WVTEYSPMIA (114 aa). Asparagine 91 and asparagine 100 each carry an N-linked (GlcNAc...) asparagine glycan. The interval 230 to 233 is PDIA3-binding site; it reads DKWD. The short motif at 269–272 is the Prevents secretion from ER element; the sequence is KEEL.

It belongs to the protein disulfide isomerase family. As to quaternary structure, interacts with PDIA3.

It is found in the endoplasmic reticulum lumen. Functionally, specifically binds unfolded proteins and may recruit protein disulfide isomerase PDIA3 to unfolded substrates. Binds protein substrates via a hydrophobic pocket in the C-terminal domain. May play a role in the unfolded stress response. The polypeptide is Endoplasmic reticulum resident protein 27 (Erp27) (Mus musculus (Mouse)).